Consider the following 63-residue polypeptide: MKANELREKSVEQLNEQLLELLRDQFNLRMQKATGQLGQSHLLSQVKRDIARVKTVLNQQAGK.

The protein belongs to the universal ribosomal protein uL29 family.

In Stutzerimonas stutzeri (strain A1501) (Pseudomonas stutzeri), this protein is Large ribosomal subunit protein uL29.